The chain runs to 417 residues: Hydroxysteroid dehydrogenase-like protein 2 (417 aa).

NADP(+) contacts are provided by residues 17 to 23 (GASRGIG), K42, and D74. The active-site Proton acceptor is the Y168. An NADP(+)-binding site is contributed by K172. The 109-residue stretch at 306–414 (ASPLQETFKA…KLEKILGQMN (109 aa)) folds into the SCP2 domain.

This sequence belongs to the short-chain dehydrogenases/reductases (SDR) family.

The protein resides in the peroxisome. Its subcellular location is the mitochondrion. Has apparently no steroid dehydrogenase activity. Might act as a metabolic regulator that affects systemic adaptation to nutritional cues. This Xenopus laevis (African clawed frog) protein is Hydroxysteroid dehydrogenase-like protein 2 (hsdl2).